Reading from the N-terminus, the 408-residue chain is Dual-specificity RNA methyltransferase RlmN (408 aa).

The Proton acceptor role is filled by Glu-120. The Radical SAM core domain occupies 126-375 (EEGRGTLCIS…IRTPRGRDIL (250 aa)). Cys-133 and Cys-378 are disulfide-bonded. Cys-140, Cys-144, and Cys-147 together coordinate [4Fe-4S] cluster. Residues 204 to 205 (GE), Ser-236, 258 to 260 (SLH), and Asn-335 contribute to the S-adenosyl-L-methionine site. Cys-378 acts as the S-methylcysteine intermediate in catalysis.

The protein belongs to the radical SAM superfamily. RlmN family. It depends on [4Fe-4S] cluster as a cofactor.

The protein resides in the cytoplasm. It catalyses the reaction adenosine(2503) in 23S rRNA + 2 reduced [2Fe-2S]-[ferredoxin] + 2 S-adenosyl-L-methionine = 2-methyladenosine(2503) in 23S rRNA + 5'-deoxyadenosine + L-methionine + 2 oxidized [2Fe-2S]-[ferredoxin] + S-adenosyl-L-homocysteine. The enzyme catalyses adenosine(37) in tRNA + 2 reduced [2Fe-2S]-[ferredoxin] + 2 S-adenosyl-L-methionine = 2-methyladenosine(37) in tRNA + 5'-deoxyadenosine + L-methionine + 2 oxidized [2Fe-2S]-[ferredoxin] + S-adenosyl-L-homocysteine. Specifically methylates position 2 of adenine 2503 in 23S rRNA and position 2 of adenine 37 in tRNAs. m2A2503 modification seems to play a crucial role in the proofreading step occurring at the peptidyl transferase center and thus would serve to optimize ribosomal fidelity. This chain is Dual-specificity RNA methyltransferase RlmN, found in Rhizobium johnstonii (strain DSM 114642 / LMG 32736 / 3841) (Rhizobium leguminosarum bv. viciae).